Consider the following 572-residue polypeptide: Proline--tRNA ligase (572 aa).

It belongs to the class-II aminoacyl-tRNA synthetase family. ProS type 1 subfamily. In terms of assembly, homodimer.

Its subcellular location is the cytoplasm. It carries out the reaction tRNA(Pro) + L-proline + ATP = L-prolyl-tRNA(Pro) + AMP + diphosphate. Catalyzes the attachment of proline to tRNA(Pro) in a two-step reaction: proline is first activated by ATP to form Pro-AMP and then transferred to the acceptor end of tRNA(Pro). As ProRS can inadvertently accommodate and process non-cognate amino acids such as alanine and cysteine, to avoid such errors it has two additional distinct editing activities against alanine. One activity is designated as 'pretransfer' editing and involves the tRNA(Pro)-independent hydrolysis of activated Ala-AMP. The other activity is designated 'posttransfer' editing and involves deacylation of mischarged Ala-tRNA(Pro). The misacylated Cys-tRNA(Pro) is not edited by ProRS. This chain is Proline--tRNA ligase, found in Psychrobacter cryohalolentis (strain ATCC BAA-1226 / DSM 17306 / VKM B-2378 / K5).